We begin with the raw amino-acid sequence, 583 residues long: Putative amidase C869.01 (583 aa).

Residues 1–19 form the signal peptide; the sequence is MKLQLLFLTLAQLAKHGLA. Residues lysine 141 and serine 222 each act as charge relay system in the active site. Serine 246 acts as the Acyl-ester intermediate in catalysis.

Belongs to the amidase family.

The protein resides in the cytoplasm. It carries out the reaction a monocarboxylic acid amide + H2O = a monocarboxylate + NH4(+). This is Putative amidase C869.01 from Schizosaccharomyces pombe (strain 972 / ATCC 24843) (Fission yeast).